Reading from the N-terminus, the 802-residue chain is Spondin-1 (802 aa).

The first 23 residues, 1 to 23 (MAARLRPLALRLLARTFPLVARG), serve as a signal peptide directing secretion. In terms of domain architecture, Reelin spans 24–189 (FSDETLEKAA…DSASEGVTDK (166 aa)). Intrachain disulfides connect cysteine 39-cysteine 123, cysteine 151-cysteine 177, cysteine 194-cysteine 331, cysteine 195-cysteine 335, cysteine 197-cysteine 410, cysteine 438-cysteine 475, cysteine 449-cysteine 484, cysteine 454-cysteine 489, cysteine 497-cysteine 533, cysteine 508-cysteine 512, cysteine 543-cysteine 549, cysteine 554-cysteine 590, cysteine 565-cysteine 569, cysteine 600-cysteine 605, cysteine 610-cysteine 645, cysteine 621-cysteine 625, and cysteine 655-cysteine 660. One can recognise a Spondin domain in the interval 190–383 (PTLDCCACGT…LTSLDHPQSP (194 aa)). Asparagine 209 carries an N-linked (GlcNAc...) asparagine glycan. 3 residues coordinate Ca(2+): aspartate 320, aspartate 349, and aspartate 353. TSP type-1 domains are found at residues 437–490 (TCIY…PGCS), 496–550 (TCMM…EECS), 553–606 (SCLV…PECH), 609–661 (PCLL…PECP), 663–716 (DCEL…RKCL), and 749–801 (VCRL…NVHP). N-linked (GlcNAc...) asparagine glycosylation is present at asparagine 676.

The protein resides in the secreted. It is found in the extracellular space. Its subcellular location is the extracellular matrix. Cell adhesion protein that promotes the attachment of spinal cord and sensory neuron cells and the outgrowth of neurites in vitro. May contribute to the growth and guidance of axons in both the spinal cord and the PNS. Somite-derived spondin 1 is an inhibitory signal involved in patterning the segmental migration of neural crest cells and their topographical segregation within the rostral somites in vitro. May be required to prevent the lateral drifting of the commissural axons after having crossed the floor plate. This chain is Spondin-1 (SPON1), found in Gallus gallus (Chicken).